A 145-amino-acid chain; its full sequence is 3-hydroxyacyl-[acyl-carrier-protein] dehydratase FabZ (145 aa).

His-47 is an active-site residue.

Belongs to the thioester dehydratase family. FabZ subfamily.

The protein localises to the cytoplasm. The catalysed reaction is a (3R)-hydroxyacyl-[ACP] = a (2E)-enoyl-[ACP] + H2O. Functionally, involved in unsaturated fatty acids biosynthesis. Catalyzes the dehydration of short chain beta-hydroxyacyl-ACPs and long chain saturated and unsaturated beta-hydroxyacyl-ACPs. The protein is 3-hydroxyacyl-[acyl-carrier-protein] dehydratase FabZ of Aromatoleum aromaticum (strain DSM 19018 / LMG 30748 / EbN1) (Azoarcus sp. (strain EbN1)).